Here is a 122-residue protein sequence, read N- to C-terminus: Large ribosomal subunit protein uL14c (122 aa).

This sequence belongs to the universal ribosomal protein uL14 family. As to quaternary structure, part of the 50S ribosomal subunit.

It localises to the plastid. Functionally, binds to 23S rRNA. The chain is Large ribosomal subunit protein uL14c from Cuscuta exaltata (Tall dodder).